Consider the following 264-residue polypeptide: Probable septum site-determining protein MinC (264 aa).

The segment at 103–147 (SHGRRPRGGNDAKDADRNDAQDAQGAPEHAQAAEAPASTSAIPPA) is disordered. The segment covering 110-122 (GGNDAKDADRNDA) has biased composition (basic and acidic residues). Residues 124-147 (DAQGAPEHAQAAEAPASTSAIPPA) are compositionally biased toward low complexity.

This sequence belongs to the MinC family. As to quaternary structure, interacts with MinD and FtsZ.

Functionally, cell division inhibitor that blocks the formation of polar Z ring septums. Rapidly oscillates between the poles of the cell to destabilize FtsZ filaments that have formed before they mature into polar Z rings. Prevents FtsZ polymerization. This chain is Probable septum site-determining protein MinC, found in Ralstonia pickettii (strain 12J).